The chain runs to 499 residues: Glycerol kinase (499 aa).

Residue Thr15 participates in ADP binding. Residues Thr15, Thr16, and Ser17 each contribute to the ATP site. Position 15 (Thr15) interacts with sn-glycerol 3-phosphate. Arg19 contacts ADP. 4 residues coordinate sn-glycerol 3-phosphate: Arg85, Glu86, Tyr137, and Asp246. Arg85, Glu86, Tyr137, Asp246, and Gln247 together coordinate glycerol. ADP-binding residues include Thr268 and Gly311. 4 residues coordinate ATP: Thr268, Gly311, Gln315, and Gly412. 2 residues coordinate ADP: Gly412 and Asn416.

It belongs to the FGGY kinase family.

It carries out the reaction glycerol + ATP = sn-glycerol 3-phosphate + ADP + H(+). It participates in polyol metabolism; glycerol degradation via glycerol kinase pathway; sn-glycerol 3-phosphate from glycerol: step 1/1. Inhibited by fructose 1,6-bisphosphate (FBP). In terms of biological role, key enzyme in the regulation of glycerol uptake and metabolism. Catalyzes the phosphorylation of glycerol to yield sn-glycerol 3-phosphate. The protein is Glycerol kinase of Parabacteroides distasonis (strain ATCC 8503 / DSM 20701 / CIP 104284 / JCM 5825 / NCTC 11152).